A 269-amino-acid chain; its full sequence is Probable cytochrome c oxidase subunit 2 (269 aa).

Helical transmembrane passes span 8-28 (ITLI…PLPW), 50-70 (LLYI…FVCI), and 87-107 (ILIE…IAVP). 4 residues coordinate Cu cation: H189, C224, C228, and H232.

Belongs to the cytochrome c oxidase subunit 2 family. It depends on Cu cation as a cofactor. The cofactor is heme.

It localises to the cell membrane. It catalyses the reaction 4 Fe(II)-[cytochrome c] + O2 + 8 H(+)(in) = 4 Fe(III)-[cytochrome c] + 2 H2O + 4 H(+)(out). Functionally, subunits I and II form the functional core of the enzyme complex. Electrons originating in cytochrome c are transferred via heme a and Cu(A) to the binuclear center formed by heme a3 and Cu(B). This is Probable cytochrome c oxidase subunit 2 (ctaC) from Rickettsia bellii (strain RML369-C).